A 790-amino-acid chain; its full sequence is Cadherin-20 (790 aa).

Residues 1 to 25 (MSCKRSYHRHCALVYYMVLLDLTNA) form the signal peptide. Residues 26–52 (VFEFSHPLIRDSGNSQSRQLLHHRLKR) constitute a propeptide that is removed on maturation. The Extracellular portion of the chain corresponds to 26–612 (VFEFSHPLIR…PYTLPISLSR (587 aa)). Cadherin domains are found at residues 54–158 (WVWN…EPKF), 159–267 (LDGP…PPRF), 268–382 (PQKH…PPVF), 383–487 (GSSF…APTF), and 487–605 (FTKF…EPYT). 5 N-linked (GlcNAc...) asparagine glycosylation sites follow: Asn-254, Asn-283, Asn-413, Asn-454, and Asn-535. The helical transmembrane segment at 613–633 (GALIAILTCIFVLLVLVLLIL) threads the bilayer. At 634 to 790 (SMRRHRKQPY…YGTKDNNGSL (157 aa)) the chain is on the cytoplasmic side.

As to expression, detected in embryonic posterior neural plate, embryonic neural tube, sulcus limitans and embryonic kidney.

The protein localises to the cell membrane. Cadherins are calcium-dependent cell adhesion proteins. They preferentially interact with themselves in a homophilic manner in connecting cells; cadherins may thus contribute to the sorting of heterogeneous cell types. The protein is Cadherin-20 (cdh20) of Xenopus laevis (African clawed frog).